The following is a 345-amino-acid chain: Dimethyladenosine transferase 1, mitochondrial (345 aa).

Residues 1–27 (MAAPGKLSTCRLPPLPTIREIIKLFRL) constitute a mitochondrion transit peptide. S-adenosyl-L-methionine-binding residues include L38, G63, E85, K86, D111, V112, and N141.

The protein belongs to the class I-like SAM-binding methyltransferase superfamily. rRNA adenine N(6)-methyltransferase family. KsgA subfamily. In terms of assembly, interacts with mitochondrial RNA polymerase POLRMT. Interacts with TFAM. Bound to the maturing mtSSU until the late stages of assembly.

The protein resides in the mitochondrion. It carries out the reaction adenosine(N)/adenosine(N+1) in rRNA + 4 S-adenosyl-L-methionine = N(6)-dimethyladenosine(N)/N(6)-dimethyladenosine(N+1) in rRNA + 4 S-adenosyl-L-homocysteine + 4 H(+). Its function is as follows. Mitochondrial methyltransferase which uses S-adenosyl methionine to dimethylate two highly conserved adjacent adenosine residues (A1583 and A1584) within the loop of helix 45 at the 3-prime end of 12S rRNA, thereby regulating the assembly or stability of the small subunit of the mitochondrial ribosome. Also required for basal transcription of mitochondrial DNA, probably via its interaction with POLRMT and TFAM. Stimulates transcription independently of the methyltransferase activity. In Macaca fascicularis (Crab-eating macaque), this protein is Dimethyladenosine transferase 1, mitochondrial (TFB1M).